Here is a 740-residue protein sequence, read N- to C-terminus: MTISNTRDITPELIEAHGLKPDEYQRILELIGREPTFTELGIFSAMWNEHCSYKSSKKWLRTLPTSGPRVIQGPGENAGVVDIGDGDCVVFKMESHNHPSYIEPYQGAATGVGGILRDVFTMGARPVAAMNALRFGEPDHPKTRHLVSGVVSGVGGYGNAFGVPTVGGEVNFDKRYNGNILVNAFAAGLARHDGIFLSEAEGVGLPVVYLGAKTSRDGVGGATMASAEFDESIEEKRPTVQVGDPFTEKCLLEACLELMASGAVIAIQDMGAAGLTCSAVEMGAKGDLGIELILDHVPVREENMTAYEMMLSESQERMLMVLKPEKEAEAQAIFRKWGLDFAIVGKTTDDLRFRVIHQGEEVANLPIKDLGDEAPEYDRPWMEPGKHAPLPASNVPQVEDYSAALLKLIGSPDLSSRRWVYEQYDTLIQGNSLQVPGGDAGVIRVEGHETKALAFSSDVTPRYCEADPFEGGKQAVAECWRNITATGAEPLASTDNLNFGNPEKPEIMGQLVKAIEGIGEACRALDFPIVSGNVSLYNETNGQAILPTPTIAGVGLLPDWSQMAKIGGMQDGDTLVLLGGDGTHLGQSVYLRDLFDRADGPAPFVDLALEKRNGEFVRSAIRNGQVTACHDLSDGGLAIAVAEMAIKSGKGATLDAGDGLPHALLFGEDQARYVISATPEMAKLIALNAEGAGVPFRILGTVGGDRLKISKNVDVSVADLTQAYEGWFPNFMNGELTGNN.

Residue histidine 50 is part of the active site. ATP-binding residues include tyrosine 53 and lysine 92. Glutamate 94 is a Mg(2+) binding site. Residues 95 to 98 (SHNH) and arginine 117 contribute to the substrate site. Catalysis depends on histidine 96, which acts as the Proton acceptor. Aspartate 118 is a Mg(2+) binding site. Glutamine 241 lines the substrate pocket. Position 269 (aspartate 269) interacts with Mg(2+). 313 to 315 (ESQ) serves as a coordination point for substrate. The ATP site is built by aspartate 495 and glycine 532. Position 533 (asparagine 533) interacts with Mg(2+). A substrate-binding site is contributed by serine 535.

Belongs to the FGAMS family. Monomer. Part of the FGAM synthase complex composed of 1 PurL, 1 PurQ and 2 PurS subunits.

Its subcellular location is the cytoplasm. The enzyme catalyses N(2)-formyl-N(1)-(5-phospho-beta-D-ribosyl)glycinamide + L-glutamine + ATP + H2O = 2-formamido-N(1)-(5-O-phospho-beta-D-ribosyl)acetamidine + L-glutamate + ADP + phosphate + H(+). The protein operates within purine metabolism; IMP biosynthesis via de novo pathway; 5-amino-1-(5-phospho-D-ribosyl)imidazole from N(2)-formyl-N(1)-(5-phospho-D-ribosyl)glycinamide: step 1/2. Its function is as follows. Part of the phosphoribosylformylglycinamidine synthase complex involved in the purines biosynthetic pathway. Catalyzes the ATP-dependent conversion of formylglycinamide ribonucleotide (FGAR) and glutamine to yield formylglycinamidine ribonucleotide (FGAM) and glutamate. The FGAM synthase complex is composed of three subunits. PurQ produces an ammonia molecule by converting glutamine to glutamate. PurL transfers the ammonia molecule to FGAR to form FGAM in an ATP-dependent manner. PurS interacts with PurQ and PurL and is thought to assist in the transfer of the ammonia molecule from PurQ to PurL. This Brucella abortus (strain S19) protein is Phosphoribosylformylglycinamidine synthase subunit PurL.